The sequence spans 131 residues: Ribonuclease VapC3 (131 aa).

The PINc domain occupies 4 to 121; sequence VVDASAIAAL…GKLLTLDRQL (118 aa). D6, D100, and D118 together coordinate Mg(2+).

Belongs to the PINc/VapC protein family. Homodimer. Forms a complex with putative antitoxin VapB3, possibly VapB(2)-VapC(2). Mg(2+) serves as cofactor.

Inhibited by EDTA. In terms of biological role, toxic component of a type II toxin-antitoxin (TA) system. Has ribonuclease activity. The protein is Ribonuclease VapC3 of Pyrobaculum aerophilum (strain ATCC 51768 / DSM 7523 / JCM 9630 / CIP 104966 / NBRC 100827 / IM2).